The sequence spans 607 residues: Guanine nucleotide-binding protein-like 1 (607 aa).

Residues 1 to 14 (MPRKKPFSVKQKKK) are compositionally biased toward basic residues. The tract at residues 1–81 (MPRKKPFSVK…GPRGYDPNRY (81 aa)) is disordered. Over residues 15 to 26 (QLQDKRERKRGL) the composition is skewed to basic and acidic residues. 3 positions are modified to phosphoserine: Ser-32, Ser-33, and Ser-34. Phosphothreonine occurs at positions 48 and 50. A phosphoserine mark is found at Ser-51 and Ser-68. Positions 178–418 (WRQLWRVLEM…LCDCPGLIFP (241 aa)) constitute a CP-type G domain. A GTP-binding site is contributed by 225 to 228 (NKVD). Residue Ser-324 is modified to Phosphoserine. GTP-binding positions include 367 to 374 (GFPNVGKS) and 411 to 415 (DCPGL). The tract at residues 544–607 (GRVGPAGDEE…PYALLGEDEC (64 aa)) is disordered. Residues 550-585 (GDEEEEEEEELSSSCEEEGEEDRDADEEGEGDEDTP) are compositionally biased toward acidic residues. Phosphoserine is present on residues Ser-561, Ser-562, and Ser-563.

This sequence belongs to the TRAFAC class YlqF/YawG GTPase family.

Possible regulatory or functional link with the histocompatibility cluster. The protein is Guanine nucleotide-binding protein-like 1 (Gnl1) of Mus musculus (Mouse).